A 230-amino-acid polypeptide reads, in one-letter code: CRP-like protein Clp (230 aa).

18–139 contacts a nucleoside 3',5'-cyclic phosphate; the sequence is PSLTLDAGTI…APRILYAIGV (122 aa). The 73-residue stretch at 158–230 folds into the HTH crp-type domain; that stretch reads LDVTDRIVRT…GKTVVLYGTR (73 aa). The H-T-H motif DNA-binding region spans 190-209; it reads RQELARLVGCSREMAGRVLK.

In terms of assembly, homodimer.

Its subcellular location is the cytoplasm. With respect to regulation, allosterically inhibited by cyclic di-GMP (c-di-GMP), which binds to Clp and abolishes its ability to bind its target gene promoter. Global transcriptional regulator that regulates virulence factors production by activating or repressing the expression of a large set of genes in diffusible signal factor (DSF) pathway. The sequence is that of CRP-like protein Clp (clp) from Xanthomonas campestris pv. campestris (strain 8004).